We begin with the raw amino-acid sequence, 218 residues long: CTP-dependent diacylglycerol kinase 1 (218 aa).

At 1 to 19 the chain is on the lumenal side; that stretch reads MSTKLTWSQWSKKHEIPRK. The chain crosses the membrane as a helical span at residues 20 to 37; sequence ALHTSIGFFALLLQGCGY. His38 is a topological domain (cytoplasmic). Residues 39–59 form a helical membrane-spanning segment; that stretch reads AAQIIPVIEIGFIPAFTGDVI. Over 60–88 the chain is Lumenal; that stretch reads RFNWPAFSRLYNRVIGPLMRESEKNAWNG. The helical transmembrane segment at 89 to 109 threads the bilayer; sequence VIFYMIGVWIVLKVFPEEIAV. The Cytoplasmic portion of the chain corresponds to 110-142; it reads MSVLLLSWCDTTASTVGRKWGKYTPKIAKNKSL. Residues 143-163 traverse the membrane as a helical segment; it reads AGSLGAFVCGVFCCYVYWGLF. The Lumenal portion of the chain corresponds to 164 to 179; the sequence is RTGPDSLAAQSRIPFP. The next 2 helical transmembrane spans lie at 180–200 and 201–217; these read WLCLINGFIGAFAEAMDVWGL and DDNLVIPVVSACLLYLI. Position 218 (Met218) is a topological domain, lumenal.

It belongs to the DGK1 family. The cofactor is Ca(2+). Mg(2+) serves as cofactor.

It localises to the endoplasmic reticulum membrane. The protein resides in the nucleus membrane. The enzyme catalyses a 1,2-diacyl-sn-glycerol + CTP = a 1,2-diacyl-sn-glycero-3-phosphate + CDP + H(+). Its function is as follows. CTP-dependent diacylglycerol kinase that catalyzes the phosphorylation of diacylglycerol (DAG) to phosphatidate (PA). Controls phosphatidate levels at the nuclear envelope. Counteracts the activity of PA phosphatase ned1. May be involved in vesicle trafficking between the endoplasmic reticulum and the Golgi apparatus. Involved in pre-tRNA splicing. This is CTP-dependent diacylglycerol kinase 1 (ptp4) from Schizosaccharomyces pombe (strain 972 / ATCC 24843) (Fission yeast).